We begin with the raw amino-acid sequence, 340 residues long: Melanin-concentrating hormone receptor 2 (340 aa).

At M1–S39 the chain is on the extracellular side. N-linked (GlcNAc...) asparagine glycans are attached at residues N10 and N17. The chain crosses the membrane as a helical span at residues M40–I60. At R61–D69 the chain is on the cytoplasmic side. The chain crosses the membrane as a helical span at residues I70–I90. The Extracellular portion of the chain corresponds to H91–P104. The helical transmembrane segment at L105–V129 threads the bilayer. The Cytoplasmic portion of the chain corresponds to D130–N154. The helical transmembrane segment at L155–I175 threads the bilayer. The Extracellular portion of the chain corresponds to K176–Y200. A helical transmembrane segment spans residues L201–L221. The Cytoplasmic segment spans residues C222–M252. Residues V253 to V273 form a helical membrane-spanning segment. The Extracellular segment spans residues N274 to Y288. The chain crosses the membrane as a helical span at residues Y289–L309. The Cytoplasmic segment spans residues S310 to F340.

This sequence belongs to the G-protein coupled receptor 1 family. As to expression, specifically expressed in the brain, with highest levels in cerebral cortex, hippocampus and amygdala. No expression detected in the cerebellum, thalamus or hypothalamus.

Its subcellular location is the cell membrane. Its function is as follows. Receptor for melanin-concentrating hormone, coupled to G proteins that activate phosphoinositide hydrolysis. This Homo sapiens (Human) protein is Melanin-concentrating hormone receptor 2 (MCHR2).